The chain runs to 261 residues: Thiamine thiazole synthase (261 aa).

NAD(+)-binding positions include Ala-33, 52–53 (ER), Gly-60, Val-124, and 152–154 (HVD). Residues Asp-154 and His-169 each coordinate Fe cation. Met-219 contributes to the NAD(+) binding site. Position 229 (Arg-229) interacts with glycine.

This sequence belongs to the THI4 family. Homooctamer; tetramer of dimers. It depends on Fe(2+) as a cofactor.

It carries out the reaction hydrogen sulfide + glycine + NAD(+) = ADP-5-ethyl-4-methylthiazole-2-carboxylate + nicotinamide + 3 H2O + H(+). Its pathway is cofactor biosynthesis; thiamine diphosphate biosynthesis. Its function is as follows. Involved in the biosynthesis of the thiazole moiety of thiamine. Catalyzes the conversion of NAD and glycine to adenosine diphosphate 5-(2-hydroxyethyl)-4-methylthiazole-2-carboxylate (ADT), an adenylated thiazole intermediate, using free sulfide as a source of sulfur. The polypeptide is Thiamine thiazole synthase (Pyrobaculum islandicum (strain DSM 4184 / JCM 9189 / GEO3)).